The following is a 405-amino-acid chain: MEKYNNWKLKFYTIWAGQAVSLITSAILQMAIIFYLTEKTGSAMVLSMASLLGFLPYAVFGPAIGVLVDRHDRKKIMIGADLIIAAAGSVLTIVAFYMELPVWMVMIVLFIRSIGTAFHTPALNAVTPLLVPEEQLTKCAGYSQSLQSISYIVSPAVAALLYSVWELNAIIAIDVLGAVIASITVAIVRIPKLGDRVQSLDPNFIREMQEGMAVLRQNKGLFALLLVGTLYMFVYMPINALFPLISMDYFNGTPVHISITEISFASGMLIGGLLLGLFGNYQKRILLITASIFMMGISLTISGLLPQSGFFIFVVCCAIMGLSVPFYSGVQTALFQEKIKPEYLGRVFSLTGSIMSLAMPIGLILSALFADRIGVNHWFLLSGTLIICIAIVCPMINEIRKLDLK.

11 helical membrane passes run 14–34 (IWAG…AIIF), 48–68 (MASL…GVLV), 76–98 (IMIG…AFYM), 145–165 (SLQS…YSVW), 168–188 (NAII…VAIV), 222–242 (FALL…NALF), 259–279 (ITEI…GLFG), 285–305 (ILLI…SGLL), 310–330 (FFIF…YSGV), 350–370 (LTGS…ALFA), and 373–393 (IGVN…AIVC).

It belongs to the major facilitator superfamily. Drug:H(+) antiporter-3 (DHA3) (TC 2.A.1.21) family.

The protein localises to the cell membrane. Functionally, confers resistance to 14-membered macrolides including erythromycin and to 15-membered macrolides but not to 16-membered macrolides, lincosamides or analogs of streptogramin B. May function as an efflux pump to regulate intracellular macrolide levels. The chain is Macrolide efflux protein A from Streptococcus pyogenes serotype M6 (strain ATCC BAA-946 / MGAS10394).